We begin with the raw amino-acid sequence, 242 residues long: Histone-lysine N-methyltransferase set-1 (242 aa).

A disordered region spans residues 1–61 (MKVAAKKLAT…TRSRKGVSVK (61 aa)). The segment covering 30 to 43 (SENPSSLASHSSSS) has biased composition (low complexity). One can recognise an SET domain in the interval 104–226 (RLLEVYKDVV…QGEELLYDYG (123 aa)). Residues 114–116 (KGR), Tyr-159, and 186–187 (NH) contribute to the S-adenosyl-L-methionine site.

Belongs to the class V-like SAM-binding methyltransferase superfamily. Histone-lysine methyltransferase family. PR/SET subfamily. As to expression, in embryos, it is expressed ubiquitously. In late embryos, it is expressed in hypodermal seam cells. In L3 and L4 larvae and thereafter, it is expressed in vulval precursor cells. In adult males, it is also expressed in 6 unidentified posterior cells.

The protein resides in the nucleus. It is found in the chromosome. The catalysed reaction is L-lysyl(20)-[histone H4] + S-adenosyl-L-methionine = N(6)-methyl-L-lysyl(20)-[histone H4] + S-adenosyl-L-homocysteine + H(+). Its function is as follows. Histone methyltransferase that specifically monomethylates 'Lys-20' of histone H4 (H4K20me1). H4K20me1 is enriched on hermaphrodite X chromosomes and during mitosis. Involved in dosage compensation by repression of X-linked gene expression in hermaphrodites. Plays a role in growth and body fat regulation downstream of the TOR complex 2 pathway. This Caenorhabditis elegans protein is Histone-lysine N-methyltransferase set-1 (set-1).